A 519-amino-acid chain; its full sequence is Cytochrome P450 52-E3 (519 aa).

Residues 10–30 (VLGGISVSFLLAYQAIYFYFI) traverse the membrane as a helical segment. Cys-461 contacts heme.

This sequence belongs to the cytochrome P450 family. Heme is required as a cofactor.

The protein resides in the membrane. It catalyses the reaction an omega-methyl-long-chain fatty acid + reduced [NADPH--hemoprotein reductase] + O2 = an omega-hydroxy-long-chain fatty acid + oxidized [NADPH--hemoprotein reductase] + H2O + H(+). It carries out the reaction (9Z)-octadecenoate + reduced [NADPH--hemoprotein reductase] + O2 = 18-hydroxy-(9Z)-octadecenoate + oxidized [NADPH--hemoprotein reductase] + H2O + H(+). The catalysed reaction is hexadecanoate + reduced [NADPH--hemoprotein reductase] + O2 = 16-hydroxyhexadecanoate + oxidized [NADPH--hemoprotein reductase] + H2O + H(+). The enzyme catalyses (9Z)-hexadecenoate + reduced [NADPH--hemoprotein reductase] + O2 = (9Z)-16-hydroxyhexadec-9-enoate + oxidized [NADPH--hemoprotein reductase] + H2O + H(+). Its function is as follows. Catalyzes the terminal (at the omega-position) hydroxylation of a fatty acid. Probably involved in alkane metabolism. Has minor activity toward myristic acid, palmitic acid, palmitoleic acid and oleic acid. This is Cytochrome P450 52-E3 from Starmerella bombicola (Yeast).